A 409-amino-acid chain; its full sequence is Argininosuccinate synthase (409 aa).

Residues 11–19 (AYSGGLDTS) and Ala-38 each bind ATP. Residues Tyr-91 and Ser-96 each coordinate L-citrulline. Gly-121 is a binding site for ATP. L-aspartate contacts are provided by Thr-123, Asn-127, and Asp-128. L-citrulline is bound at residue Asn-127. 5 residues coordinate L-citrulline: Arg-131, Ser-182, Ser-191, Glu-267, and Tyr-279.

Belongs to the argininosuccinate synthase family. Type 1 subfamily. As to quaternary structure, homotetramer.

The protein resides in the cytoplasm. The catalysed reaction is L-citrulline + L-aspartate + ATP = 2-(N(omega)-L-arginino)succinate + AMP + diphosphate + H(+). The protein operates within amino-acid biosynthesis; L-arginine biosynthesis; L-arginine from L-ornithine and carbamoyl phosphate: step 2/3. The chain is Argininosuccinate synthase from Nitrobacter winogradskyi (strain ATCC 25391 / DSM 10237 / CIP 104748 / NCIMB 11846 / Nb-255).